Consider the following 923-residue polypeptide: Inorganic phosphate transporter PHO87 (923 aa).

Positions 1-334 (MRFSHFLKYN…HMNTRQELIE (334 aa)) constitute an SPX domain. At 1-461 (MRFSHFLKYN…KLFFGKRAMK (461 aa)) the chain is on the extracellular side. Disordered stretches follow at residues 40-74 (ETPT…SSSK) and 86-107 (FGSK…IDGN). The span at 95–104 (KRGDSDEKAI) shows a compositional bias: basic and acidic residues. Residue K102 forms a Glycyl lysine isopeptide (Lys-Gly) (interchain with G-Cter in ubiquitin) linkage. N-linked (GlcNAc...) asparagine glycosylation is found at N162, N202, and N274. The helical transmembrane segment at 462–482 (IGFIIIVTGVLLGVKTFNDPV) threads the bilayer. Residues 483–493 (EHRCMALVECC) lie on the Cytoplasmic side of the membrane. The chain crosses the membrane as a helical span at residues 494–514 (AFLWASEAIPLHITGLLVPLL). Residues 515–537 (TVLFRVLKDDDGKVMGAAAASTE) lie on the Extracellular side of the membrane. The chain crosses the membrane as a helical span at residues 538 to 558 (ILGTMWSSTIMILLAGFTLGE). The Cytoplasmic portion of the chain corresponds to 559 to 583 (ALSQYNVAKVLASWLLALAGTKPRN). The chain crosses the membrane as a helical span at residues 584–604 (VLLMAMSVVFFLSMWISNVAS). Residues 605-627 (PVLTYSLLTPLLDPLDYTSPFAK) are Extracellular-facing. A helical transmembrane segment spans residues 628–648 (ALVMGVALSADIGGMASPISS). Residues 649–667 (PQNIISMQYLKPYGIGWGQ) are Cytoplasmic-facing. Residues 668-688 (FFAVALPTGILSMLCSWALMI) form a helical membrane-spanning segment. Residues 689-707 (LTFKIGKTKLEKFKPIRTR) lie on the Extracellular side of the membrane. The helical transmembrane segment at 708–728 (FTIKQYFIIIVTIATILLWCV) threads the bilayer. The Cytoplasmic segment spans residues 729-735 (ESQIESA). The helical transmembrane segment at 736–756 (FGSSGEIAVIPIVLFFGTGLL) threads the bilayer. The Extracellular portion of the chain corresponds to 757-767 (STKDFNTFPWS). The chain crosses the membrane as a helical span at residues 768 to 788 (IVVLAMGGIALGKAVSSSGLL). The Cytoplasmic portion of the chain corresponds to 789-802 (VTIARALQKKIQND). A helical transmembrane segment spans residues 803-823 (GVFAILCIFGILMLVVGTFVS). Residues 824–849 (HTVSAIIIIPLVQEVGDKLSDPKAAP) are Extracellular-facing. The helical transmembrane segment at 850 to 870 (ILVFGCALLASCGMGLASSGF) threads the bilayer. At 871 to 898 (PNVTAISMTDKKGNRWLTVGAFISRGVP) the chain is on the cytoplasmic side. The helical transmembrane segment at 899 to 919 (ASLLAFVCVITLGYGISSSVL) threads the bilayer. Residues 920–923 (KGST) are Extracellular-facing.

This sequence belongs to the CitM (TC 2.A.11) transporter family.

Its subcellular location is the membrane. Involved in the uptake of inorganic phosphate. This Saccharomyces cerevisiae (strain ATCC 204508 / S288c) (Baker's yeast) protein is Inorganic phosphate transporter PHO87 (PHO87).